Reading from the N-terminus, the 207-residue chain is Phosphoribosylglycinamide formyltransferase (207 aa).

13–15 (GSN) is a N(1)-(5-phospho-beta-D-ribosyl)glycinamide binding site. (6R)-10-formyltetrahydrofolate contacts are provided by residues 100–103 (MHIL) and Asn-120. The active-site Proton donor is the His-122. Residue Asp-162 coordinates (6R)-10-formyltetrahydrofolate. Glu-191 provides a ligand contact to N(1)-(5-phospho-beta-D-ribosyl)glycinamide.

Belongs to the GART family.

It catalyses the reaction N(1)-(5-phospho-beta-D-ribosyl)glycinamide + (6R)-10-formyltetrahydrofolate = N(2)-formyl-N(1)-(5-phospho-beta-D-ribosyl)glycinamide + (6S)-5,6,7,8-tetrahydrofolate + H(+). Its pathway is purine metabolism; IMP biosynthesis via de novo pathway; N(2)-formyl-N(1)-(5-phospho-D-ribosyl)glycinamide from N(1)-(5-phospho-D-ribosyl)glycinamide (10-formyl THF route): step 1/1. The protein is Phosphoribosylglycinamide formyltransferase (ade5) of Schizosaccharomyces pombe (strain 972 / ATCC 24843) (Fission yeast).